A 215-amino-acid chain; its full sequence is Ribosome maturation factor RimP (215 aa).

The disordered stretch occupies residues 180–215 (KDNRARKEAKKRRGEPDDDVPEGAEADATEEHEQES). Positions 195 to 207 (PDDDVPEGAEADA) are enriched in acidic residues.

The protein belongs to the RimP family.

It is found in the cytoplasm. Its function is as follows. Required for maturation of 30S ribosomal subunits. The protein is Ribosome maturation factor RimP of Mesorhizobium japonicum (strain LMG 29417 / CECT 9101 / MAFF 303099) (Mesorhizobium loti (strain MAFF 303099)).